The primary structure comprises 76 residues: ATP synthase subunit 9, mitochondrial (76 aa).

Methionine 1 is subject to N-formylmethionine. The next 2 helical transmembrane spans lie at 14–34 (IATI…AALI) and 52–72 (ILGF…SFLL).

As to quaternary structure, F-type ATP synthases have 2 components, the catalytic core F(1) and the membrane-embedded component F(0), linked together by a central stalk and a peripheral stalk. The central stalk, also called rotor shaft, is often seen as part of F(1). The peripheral stalk is seen as part of F(0). F(0) contains the membrane channel next to the rotor. F-type ATP synthases form dimers but each monomer functions independently in ATP generation. The dimer consists of 18 different polypeptides: ATP1 (subunit alpha, part of F(1), 3 molecules per monomer), ATP2 (subunit beta, part of F(1), 3 molecules per monomer), ATP3 (subunit gamma, part of the central stalk), ATP4 (subunit b, part of the peripheral stalk), ATP5/OSCP (subunit 5/OSCP, part of the peripheral stalk), ATP6 (subunit a, part of the peripheral stalk), ATP7 (subunit d, part of the peripheral stalk), ATP8 (subunit 8, part of the peripheral stalk), OLI1 (subunit c, part of the rotor, 10 molecules per monomer), ATP14 (subunit h, part of the peripheral stalk), ATP15 (subunit epsilon, part of the central stalk), ATP16 (subunit delta, part of the central stalk), ATP17 (subunit f, part of the peripheral stalk), ATP18 (subunit i/j, part of the peripheral stalk). Dimer-specific subunits are ATP19 (subunit k, at interface between monomers), ATP20 (subunit g, at interface between monomers), TIM11 (subunit e, at interface between monomers). Also contains subunit L.

The protein localises to the mitochondrion inner membrane. Functionally, mitochondrial membrane ATP synthase (F(1)F(0) ATP synthase or Complex V) produces ATP from ADP in the presence of a proton gradient across the membrane which is generated by electron transport complexes of the respiratory chain. F-type ATP synthases consist of two structural domains, F(1) - containing the extramembraneous catalytic core, and F(0) - containing the membrane proton channel, linked together by a central stalk and a peripheral stalk. During catalysis, ATP synthesis in the catalytic domain of F(1) is coupled via a rotary mechanism of the central stalk subunits to proton translocation. Part of the complex F(0) domain. A homomeric c-ring of 10 OLI1/ATP9 subunits is part of the complex rotary element. In Pichia angusta (Yeast), this protein is ATP synthase subunit 9, mitochondrial.